The primary structure comprises 199 residues: MARCKS-related protein (199 aa).

A disordered region spans residues 1–199; the sequence is MGSQSSKAPR…GPASASAENE (199 aa). Residue glycine 2 is the site of N-myristoyl glycine attachment. Threonine 14 carries the phosphothreonine modification. Positions 16–26 are enriched in low complexity; that stretch reads EEAAGASPAKA. 3 positions are modified to phosphoserine: serine 22, serine 36, and serine 48. The span at 53–64 shows a compositional bias: low complexity; it reads GADEAAGATGDA. Serine 71 is subject to Phosphoserine. A compositionally biased stretch (basic and acidic residues) spans 74–85; that stretch reads AEAKGEVAPKET. Threonine 85 is modified (phosphothreonine). A compositionally biased stretch (basic residues) spans 86 to 98; that stretch reads PKKKKKFSFKKPF. An effector domain involved in lipid-binding and calmodulin-binding region spans residues 87-110; sequence KKKKKFSFKKPFKLSGLSFKRNRK. A phosphoserine; by PKC mark is found at serine 93, serine 101, and serine 104. The residue at position 119 (serine 119) is a Phosphoserine. Serine 120 is subject to Phosphoserine; by MAPK8. Phosphoserine is present on residues serine 132 and serine 135. Threonine 148 bears the Phosphothreonine; by MAPK8 mark. A phosphoserine mark is found at serine 151, serine 162, and serine 165. The segment covering 175 to 199 has biased composition (low complexity); that stretch reads GPQAAEPSTPSGPESGPASASAENE. Position 183 is a phosphothreonine; by MAPK8 (threonine 183).

The protein belongs to the MARCKS family. In terms of assembly, binds to filamentous actin (F-actin), but not to monomeric G-actin, independently of its phosphorylation status. Interacts with calmodulin. Phosphorylated. Phosphorylation at Ser-120 and Thr-183 is non-redundantly catalyzed by MAPK8 in vivo. Phosphorylation at Thr-148 is preferentially catalyzed by MAPK8 in vivo, but this modification can also be catalyzed by other kinases in the absence of MAPK8. May be phosphorylated by protein kinase C, which disrupts the interaction with calmodulin.

It localises to the cytoplasm. Its subcellular location is the cytoskeleton. The protein resides in the cell membrane. Functionally, controls cell movement by regulating actin cytoskeleton homeostasis and filopodium and lamellipodium formation. When unphosphorylated, induces cell migration. When phosphorylated by MAPK8, induces actin bundles formation and stabilization, thereby reducing actin plasticity, hence restricting cell movement, including neuronal migration. May be involved in coupling the protein kinase C and calmodulin signal transduction systems. This chain is MARCKS-related protein (Marcksl1), found in Rattus norvegicus (Rat).